The primary structure comprises 83 residues: Pigment-dispersing hormone peptides (83 aa).

An N-terminal signal peptide occupies residues 1-24; sequence MRFIILGVLFIAVASMILSNGVMA. A80 bears the Alanine amide mark.

It belongs to the arthropod PDH family. As to expression, strongly expressed in eyestalk tissue and cerebral ganglia (at protein level).

It is found in the secreted. In terms of biological role, the pigment-dispersing hormone causes the migration of the distal retinal pigment into the proximal end of the pigment chromatophore cells and thus decreases the amount of light entering the retinulas. May also function as a neurotransmitter and/or neuromodulator. The protein is Pigment-dispersing hormone peptides of Eurydice pulchra (Speckled sea louse).